We begin with the raw amino-acid sequence, 515 residues long: 1-pyrroline-5-carboxylate dehydrogenase 1 (515 aa).

Active-site residues include Glu286 and Cys320.

The protein belongs to the aldehyde dehydrogenase family. RocA subfamily.

The enzyme catalyses L-glutamate 5-semialdehyde + NAD(+) + H2O = L-glutamate + NADH + 2 H(+). It functions in the pathway amino-acid degradation; L-proline degradation into L-glutamate; L-glutamate from L-proline: step 2/2. This is 1-pyrroline-5-carboxylate dehydrogenase 1 (rocA1) from Halalkalibacterium halodurans (strain ATCC BAA-125 / DSM 18197 / FERM 7344 / JCM 9153 / C-125) (Bacillus halodurans).